A 191-amino-acid polypeptide reads, in one-letter code: Penicillin-binding protein activator LpoB (191 aa).

The signal sequence occupies residues 1 to 16; sequence MKRILFVILSTMLLAS. Residue cysteine 17 is the site of N-palmitoyl cysteine attachment. Residue cysteine 17 is the site of S-diacylglycerol cysteine attachment. The disordered stretch occupies residues 25 to 48; the sequence is QPAPVTPVEPKEKQETTPIEPSEK.

Belongs to the LpoB family. As to quaternary structure, interacts with PBP1b.

The protein resides in the cell outer membrane. In terms of biological role, regulator of peptidoglycan synthesis that is essential for the function of penicillin-binding protein 1B (PBP1b). The protein is Penicillin-binding protein activator LpoB of Xenorhabdus nematophila (strain ATCC 19061 / DSM 3370 / CCUG 14189 / LMG 1036 / NCIMB 9965 / AN6).